Consider the following 257-residue polypeptide: MSMVETAPSKIQVRNLNFYYGKFHALKNINLDIAKNQVTAFIGPSGCGKSTLLRTFNKMFELYPEQRAEGEILLDGDNILTNSQDIALLRAKVGMVFQKPTPFPMSIYDNIAFGVRLFEKLSRADMDERVQWALTKAALWNETKDKLHQSGYSLSGGQQQRLCIARGIAIRPEVLLLDEPCSALDPISTGRIEELITELKQDYTVVIVTHNMQQAARCSDHTAFMYLGELIEFSNTDDLFTKPAKKQTEDYITGRYG.

Residues 11–252 (IQVRNLNFYY…PAKKQTEDYI (242 aa)) enclose the ABC transporter domain. 43-50 (GPSGCGKS) contributes to the ATP binding site.

The protein belongs to the ABC transporter superfamily. Phosphate importer (TC 3.A.1.7) family. As to quaternary structure, the complex is composed of two ATP-binding proteins (PstB), two transmembrane proteins (PstC and PstA) and a solute-binding protein (PstS).

It localises to the cell inner membrane. The enzyme catalyses phosphate(out) + ATP + H2O = ADP + 2 phosphate(in) + H(+). In terms of biological role, part of the ABC transporter complex PstSACB involved in phosphate import. Responsible for energy coupling to the transport system. The protein is Phosphate import ATP-binding protein PstB of Escherichia coli O6:K15:H31 (strain 536 / UPEC).